The chain runs to 267 residues: Ribosomal RNA small subunit methyltransferase A (267 aa).

Histidine 13, leucine 15, glycine 40, glutamate 61, aspartate 85, and asparagine 105 together coordinate S-adenosyl-L-methionine.

This sequence belongs to the class I-like SAM-binding methyltransferase superfamily. rRNA adenine N(6)-methyltransferase family. RsmA subfamily.

The protein localises to the cytoplasm. It carries out the reaction adenosine(1518)/adenosine(1519) in 16S rRNA + 4 S-adenosyl-L-methionine = N(6)-dimethyladenosine(1518)/N(6)-dimethyladenosine(1519) in 16S rRNA + 4 S-adenosyl-L-homocysteine + 4 H(+). Functionally, specifically dimethylates two adjacent adenosines (A1518 and A1519) in the loop of a conserved hairpin near the 3'-end of 16S rRNA in the 30S particle. May play a critical role in biogenesis of 30S subunits. The polypeptide is Ribosomal RNA small subunit methyltransferase A (Bacteroides thetaiotaomicron (strain ATCC 29148 / DSM 2079 / JCM 5827 / CCUG 10774 / NCTC 10582 / VPI-5482 / E50)).